The following is a 486-amino-acid chain: Adenosylhomocysteinase (486 aa).

The substrate site is built by Thr63, Asp147, and Glu209. 210-212 (TTT) serves as a coordination point for NAD(+). The substrate site is built by Lys239 and Asp243. NAD(+) is bound by residues Asn244, 273–278 (GYGDVG), Glu296, Asn331, 352–354 (IGH), and Asn400.

The protein belongs to the adenosylhomocysteinase family. NAD(+) serves as cofactor.

The enzyme catalyses S-adenosyl-L-homocysteine + H2O = L-homocysteine + adenosine. Its pathway is amino-acid biosynthesis; L-homocysteine biosynthesis; L-homocysteine from S-adenosyl-L-homocysteine: step 1/1. Adenosylhomocysteine is a competitive inhibitor of S-adenosyl-L-methionine-dependent methyl transferase reactions; therefore adenosylhomocysteinase may play a key role in the control of methylations via regulation of the intracellular concentration of adenosylhomocysteine. This is Adenosylhomocysteinase from Trichomonas vaginalis.